The chain runs to 151 residues: S-protein homolog 27 (151 aa).

Residues N91 and N123 are each glycosylated (N-linked (GlcNAc...) asparagine).

It belongs to the plant self-incompatibility (S1) protein family.

The protein localises to the secreted. The chain is S-protein homolog 27 from Arabidopsis thaliana (Mouse-ear cress).